The following is a 121-amino-acid chain: EDGDPAKGEAVFKKCMACHRVGPDAKNLVGPALTGVIDRQAGTAPGFNYSAINHAAGEAGLHWTPENIIAYLPDPNAFLRKFLADAGHAEQAKGSTKMVFKLPDEQERKDVVAYLKQFSPQ.

4 residues coordinate heme c: cysteine 15, cysteine 18, histidine 19, and methionine 98.

The protein belongs to the cytochrome c family. In terms of processing, binds 1 heme c group covalently per subunit.

Cytochrome c2 is found mainly in purple, non-sulfur, photosynthetic bacteria where it functions as the electron donor to the oxidized bacteriochlorophyll in the photophosphorylation pathway. However, it may also have a role in the respiratory chain and is found in some non-photosynthetic bacteria. The chain is Cytochrome c2 iso-2 from Rhodospirillum centenum (Rhodocista centenaria).